Here is a 291-residue protein sequence, read N- to C-terminus: Methylsterol monooxygenase 1-3 (291 aa).

A run of 3 helical transmembrane segments spans residues 41–61, 92–112, and 114–134; these read TILV…IVEW, FLLV…MVGI, and SGLP…YFLI. In terms of domain architecture, Fatty acid hydroxylase spans 128-263; that stretch reads LVVYFLIEDY…FTYCDYIYGT (136 aa). The Histidine box-1 motif lies at 143–147; sequence HRWMH. The Histidine box-2 motif lies at 156-160; it reads HRIHH. The chain crosses the membrane as a helical span at residues 178 to 198; that stretch reads ILILGIPTFLGPAIAPGHIMT. The short motif at 235–241 is the Histidine box-3 element; the sequence is YHDYHHY.

The protein belongs to the sterol desaturase family. As to quaternary structure, interacts with ACBP1. Fe cation serves as cofactor. Expressed at low levels in leaves, roots, siliques and flowers.

The protein localises to the endoplasmic reticulum membrane. The catalysed reaction is 4,4-dimethyl-5alpha-cholest-7-en-3beta-ol + 6 Fe(II)-[cytochrome b5] + 3 O2 + 5 H(+) = 4alpha-carboxy-4beta-methyl-5alpha-cholest-7-ene-3beta-ol + 6 Fe(III)-[cytochrome b5] + 4 H2O. It catalyses the reaction 24-methylidenelophenol + 6 Fe(II)-[cytochrome b5] + 3 O2 + 5 H(+) = 4alpha-carboxy-ergosta-7,24(24(1))-dien-3beta-ol + 6 Fe(III)-[cytochrome b5] + 4 H2O. Non-heme iron oxygenase involved in sterols biosynthesis by catalyzing the removal of the first methyl group at the C-4 position. 4,4-dimethyl-9-beta,19-cyclopropylsterols such as 24-methylenecycloartanol are the preferred substrates. The sequence is that of Methylsterol monooxygenase 1-3 from Arabidopsis thaliana (Mouse-ear cress).